The sequence spans 393 residues: Phosphoglycerate kinase (393 aa).

Substrate is bound by residues 21-23, Arg-36, 59-62, Arg-114, and Arg-147; these read DIN and HFGR. ATP contacts are provided by residues Lys-197, Glu-319, and 349-352; that span reads GGDT.

Belongs to the phosphoglycerate kinase family. In terms of assembly, monomer.

It is found in the cytoplasm. It carries out the reaction (2R)-3-phosphoglycerate + ATP = (2R)-3-phospho-glyceroyl phosphate + ADP. It participates in carbohydrate degradation; glycolysis; pyruvate from D-glyceraldehyde 3-phosphate: step 2/5. The chain is Phosphoglycerate kinase from Dinoroseobacter shibae (strain DSM 16493 / NCIMB 14021 / DFL 12).